A 500-amino-acid chain; its full sequence is GTPase Der (500 aa).

EngA-type G domains are found at residues 3–166 and 211–384; these read PVVA…MEEL and IKLA…VSAT. GTP-binding positions include 9–16, 56–60, 118–121, 217–224, 264–268, and 329–332; these read GRPNVGKS, DTGGI, NKID, DTAGV, and NKWD. The region spanning 385–469 is the KH-like domain; sequence KRVGTSVLTR…PIRIQFQNSE (85 aa). Positions 481–500 are disordered; that stretch reads LSQERQRKRLVGAVKNRNKK. The segment covering 486-500 has biased composition (basic residues); the sequence is QRKRLVGAVKNRNKK.

It belongs to the TRAFAC class TrmE-Era-EngA-EngB-Septin-like GTPase superfamily. EngA (Der) GTPase family. In terms of assembly, associates with the 50S ribosomal subunit.

GTPase that plays an essential role in the late steps of ribosome biogenesis. The protein is GTPase Der of Aliivibrio salmonicida (strain LFI1238) (Vibrio salmonicida (strain LFI1238)).